We begin with the raw amino-acid sequence, 1058 residues long: Carbamoyl phosphate synthase large chain (1058 aa).

The tract at residues 1 to 401 is carboxyphosphate synthetic domain; the sequence is MPKRKDIQKI…SLLKACRSLE (401 aa). ATP contacts are provided by Arg-129, Arg-169, Gly-175, Gly-176, Arg-208, Ile-210, Glu-215, Gly-241, Ile-242, His-243, Gln-284, and Glu-298. The ATP-grasp 1 domain maps to 133–327; the sequence is KQLMQELDQP…IAKLAAKIAV (195 aa). Positions 284, 298, and 300 each coordinate Mg(2+). Gln-284, Glu-298, and Asn-300 together coordinate Mn(2+). Positions 402–546 are oligomerization domain; sequence IGVCHNEMTS…YSTYELENES (145 aa). Residues 547-929 form a carbamoyl phosphate synthetic domain region; it reads VQSNKESILV…ALYKAFEANN (383 aa). The ATP-grasp 2 domain maps to 671 to 861; that stretch reads EKALKELGIP…MAQIATKLIL (191 aa). Positions 707, 746, 748, 752, 777, 778, 779, 780, 820, and 832 each coordinate ATP. Mg(2+) contacts are provided by Gln-820, Glu-832, and Asn-834. Residues Gln-820, Glu-832, and Asn-834 each contribute to the Mn(2+) site. Residues 930–1058 form the MGS-like domain; sequence SHLSEFGQIV…ESRCFNIEAI (129 aa). Residues 930 to 1058 form an allosteric domain region; that stretch reads SHLSEFGQIV…ESRCFNIEAI (129 aa).

The protein belongs to the CarB family. Composed of two chains; the small (or glutamine) chain promotes the hydrolysis of glutamine to ammonia, which is used by the large (or ammonia) chain to synthesize carbamoyl phosphate. Tetramer of heterodimers (alpha,beta)4. Mg(2+) serves as cofactor. The cofactor is Mn(2+).

The enzyme catalyses hydrogencarbonate + L-glutamine + 2 ATP + H2O = carbamoyl phosphate + L-glutamate + 2 ADP + phosphate + 2 H(+). It catalyses the reaction hydrogencarbonate + NH4(+) + 2 ATP = carbamoyl phosphate + 2 ADP + phosphate + 2 H(+). It functions in the pathway amino-acid biosynthesis; L-arginine biosynthesis; carbamoyl phosphate from bicarbonate: step 1/1. Its pathway is pyrimidine metabolism; UMP biosynthesis via de novo pathway; (S)-dihydroorotate from bicarbonate: step 1/3. In terms of biological role, large subunit of the glutamine-dependent carbamoyl phosphate synthetase (CPSase). CPSase catalyzes the formation of carbamoyl phosphate from the ammonia moiety of glutamine, carbonate, and phosphate donated by ATP, constituting the first step of 2 biosynthetic pathways, one leading to arginine and/or urea and the other to pyrimidine nucleotides. The large subunit (synthetase) binds the substrates ammonia (free or transferred from glutamine from the small subunit), hydrogencarbonate and ATP and carries out an ATP-coupled ligase reaction, activating hydrogencarbonate by forming carboxy phosphate which reacts with ammonia to form carbamoyl phosphate. This Streptococcus pyogenes serotype M1 protein is Carbamoyl phosphate synthase large chain.